We begin with the raw amino-acid sequence, 533 residues long: Chromosomal replication initiator protein DnaA (533 aa).

The domain I, interacts with DnaA modulators stretch occupies residues 1 to 72 (MNDFWQHCSA…DLARDFWNAP (72 aa)). The segment at 72 to 196 (PIEVQFVLDP…EAADSMYERS (125 aa)) is domain II. Residues 83-110 (AGQRSPAGATPLAPRAPLPSANPAPVGP) form a disordered region. Positions 96–110 (PRAPLPSANPAPVGP) are enriched in pro residues. The segment at 197 to 413 (KLNPVLTFDN…GALRKILAYS (217 aa)) is domain III, AAA+ region. ATP is bound by residues Gly-241, Gly-243, Lys-244, and Thr-245. A domain IV, binds dsDNA region spans residues 414–533 (KFHGREITIE…LHVLEQTLKG (120 aa)).

It belongs to the DnaA family. Oligomerizes as a right-handed, spiral filament on DNA at oriC.

The protein resides in the cytoplasm. Plays an essential role in the initiation and regulation of chromosomal replication. ATP-DnaA binds to the origin of replication (oriC) to initiate formation of the DNA replication initiation complex once per cell cycle. Binds the DnaA box (a 9 base pair repeat at the origin) and separates the double-stranded (ds)DNA. Forms a right-handed helical filament on oriC DNA; dsDNA binds to the exterior of the filament while single-stranded (ss)DNA is stabiized in the filament's interior. The ATP-DnaA-oriC complex binds and stabilizes one strand of the AT-rich DNA unwinding element (DUE), permitting loading of DNA polymerase. After initiation quickly degrades to an ADP-DnaA complex that is not apt for DNA replication. Binds acidic phospholipids. This chain is Chromosomal replication initiator protein DnaA, found in Burkholderia mallei (strain NCTC 10247).